The primary structure comprises 157 residues: Protein Smg homolog (157 aa).

Belongs to the Smg family.

The sequence is that of Protein Smg homolog from Aliivibrio fischeri (strain ATCC 700601 / ES114) (Vibrio fischeri).